Reading from the N-terminus, the 156-residue chain is Small ribosomal subunit protein uS7 (156 aa).

This sequence belongs to the universal ribosomal protein uS7 family. Part of the 30S ribosomal subunit. Contacts proteins S9 and S11.

Functionally, one of the primary rRNA binding proteins, it binds directly to 16S rRNA where it nucleates assembly of the head domain of the 30S subunit. Is located at the subunit interface close to the decoding center, probably blocks exit of the E-site tRNA. In Anaeromyxobacter sp. (strain Fw109-5), this protein is Small ribosomal subunit protein uS7.